The primary structure comprises 831 residues: DNA ligase (831 aa).

NAD(+) contacts are provided by residues 34 to 38, 83 to 84, and Glu-114; these read DADYD and SL. The active-site N6-AMP-lysine intermediate is Lys-116. 4 residues coordinate NAD(+): Arg-137, Glu-174, Lys-291, and Lys-315. Zn(2+)-binding residues include Cys-409, Cys-412, Cys-427, and Cys-433. Residues 749–831 enclose the BRCT domain; the sequence is AHTAPLNGQS…LAFLEQYSAQ (83 aa).

It belongs to the NAD-dependent DNA ligase family. LigA subfamily. It depends on Mg(2+) as a cofactor. The cofactor is Mn(2+).

It catalyses the reaction NAD(+) + (deoxyribonucleotide)n-3'-hydroxyl + 5'-phospho-(deoxyribonucleotide)m = (deoxyribonucleotide)n+m + AMP + beta-nicotinamide D-nucleotide.. Functionally, DNA ligase that catalyzes the formation of phosphodiester linkages between 5'-phosphoryl and 3'-hydroxyl groups in double-stranded DNA using NAD as a coenzyme and as the energy source for the reaction. It is essential for DNA replication and repair of damaged DNA. The sequence is that of DNA ligase from Xylella fastidiosa (strain M23).